Consider the following 150-residue polypeptide: Protein Turandot X (150 aa).

The first 22 residues, 1–22, serve as a signal peptide directing secretion; that stretch reads MGLHIGSLLICVFLGILPFATA. The disordered stretch occupies residues 127–150; the sequence is REEGQSNHANSPTTLPSRIQKMTK. The span at 132–150 shows a compositional bias: polar residues; it reads SNHANSPTTLPSRIQKMTK.

This sequence belongs to the Turandot family.

The protein localises to the secreted. Its function is as follows. A humoral factor that may play a role in stress tolerance. The polypeptide is Protein Turandot X (Drosophila simulans (Fruit fly)).